We begin with the raw amino-acid sequence, 506 residues long: D-alanine--D-alanyl carrier protein ligase (506 aa).

Residue 152–153 (TS) coordinates ATP. Asp197 provides a ligand contact to D-alanine. 292–297 (NTYGPT) contributes to the ATP binding site. D-alanine is bound at residue Val301. ATP contacts are provided by residues Asp383, 395 to 398 (YRGR), and Lys494. D-alanine is bound at residue Lys494.

Belongs to the ATP-dependent AMP-binding enzyme family. DltA subfamily.

The protein localises to the cytoplasm. The enzyme catalyses holo-[D-alanyl-carrier protein] + D-alanine + ATP = D-alanyl-[D-alanyl-carrier protein] + AMP + diphosphate. It functions in the pathway cell wall biogenesis; lipoteichoic acid biosynthesis. In terms of biological role, catalyzes the first step in the D-alanylation of lipoteichoic acid (LTA), the activation of D-alanine and its transfer onto the D-alanyl carrier protein (Dcp) DltC. In an ATP-dependent two-step reaction, forms a high energy D-alanyl-AMP intermediate, followed by transfer of the D-alanyl residue as a thiol ester to the phosphopantheinyl prosthetic group of the Dcp. D-alanylation of LTA plays an important role in modulating the properties of the cell wall in Gram-positive bacteria, influencing the net charge of the cell wall. In Lacticaseibacillus paracasei (strain ATCC 334 / BCRC 17002 / CCUG 31169 / CIP 107868 / KCTC 3260 / NRRL B-441) (Lactobacillus paracasei), this protein is D-alanine--D-alanyl carrier protein ligase.